A 347-amino-acid polypeptide reads, in one-letter code: 4-hydroxy-2-oxovalerate aldolase 1 (347 aa).

In terms of domain architecture, Pyruvate carboxyltransferase spans 8-261; that stretch reads VTLYDMSLLX…ETGIDLYKIM (254 aa). His20 acts as the Proton acceptor in catalysis. The substrate site is built by Ser171 and His200. Residues His200 and His202 each contribute to the Mn(2+) site. Tyr291 contacts substrate.

Belongs to the 4-hydroxy-2-oxovalerate aldolase family.

The enzyme catalyses (S)-4-hydroxy-2-oxopentanoate = acetaldehyde + pyruvate. The polypeptide is 4-hydroxy-2-oxovalerate aldolase 1 (salH) (Metapseudomonas furukawaii (Pseudomonas furukawaii)).